The chain runs to 188 residues: Adenine phosphoribosyltransferase (188 aa).

The protein belongs to the purine/pyrimidine phosphoribosyltransferase family. As to quaternary structure, homodimer.

The protein resides in the cytoplasm. The enzyme catalyses AMP + diphosphate = 5-phospho-alpha-D-ribose 1-diphosphate + adenine. Its pathway is purine metabolism; AMP biosynthesis via salvage pathway; AMP from adenine: step 1/1. Catalyzes a salvage reaction resulting in the formation of AMP, that is energically less costly than de novo synthesis. This is Adenine phosphoribosyltransferase from Burkholderia orbicola (strain MC0-3).